A 197-amino-acid polypeptide reads, in one-letter code: Nucleoid occlusion factor SlmA (197 aa).

The region spanning 7 to 67 is the HTH tetR-type domain; it reads INRREHILQC…GLIEFIEDAI (61 aa). Residues 30-49 constitute a DNA-binding region (H-T-H motif); it reads TTAKLAAEVGVSEAALYRHF. Positions 110–130 form a coiled coil; the sequence is ALLGENERLRSRIDVLFAKIE.

Belongs to the nucleoid occlusion factor SlmA family. As to quaternary structure, homodimer. Interacts with FtsZ.

Its subcellular location is the cytoplasm. The protein resides in the nucleoid. Functionally, required for nucleoid occlusion (NO) phenomenon, which prevents Z-ring formation and cell division over the nucleoid. Acts as a DNA-associated cell division inhibitor that binds simultaneously chromosomal DNA and FtsZ, and disrupts the assembly of FtsZ polymers. SlmA-DNA-binding sequences (SBS) are dispersed on non-Ter regions of the chromosome, preventing FtsZ polymerization at these regions. The sequence is that of Nucleoid occlusion factor SlmA from Shewanella frigidimarina (strain NCIMB 400).